Reading from the N-terminus, the 365-residue chain is tRNA/tmRNA (uracil-C(5))-methyltransferase (365 aa).

Residues Gln-189, Tyr-217, Asn-222, Glu-238, and Asp-298 each coordinate S-adenosyl-L-methionine. Residue Cys-323 is the Nucleophile of the active site. Glu-357 (proton acceptor) is an active-site residue.

This sequence belongs to the class I-like SAM-binding methyltransferase superfamily. RNA M5U methyltransferase family. TrmA subfamily.

The catalysed reaction is uridine(54) in tRNA + S-adenosyl-L-methionine = 5-methyluridine(54) in tRNA + S-adenosyl-L-homocysteine + H(+). It carries out the reaction uridine(341) in tmRNA + S-adenosyl-L-methionine = 5-methyluridine(341) in tmRNA + S-adenosyl-L-homocysteine + H(+). Dual-specificity methyltransferase that catalyzes the formation of 5-methyluridine at position 54 (m5U54) in all tRNAs, and that of position 341 (m5U341) in tmRNA (transfer-mRNA). The sequence is that of tRNA/tmRNA (uracil-C(5))-methyltransferase from Shewanella piezotolerans (strain WP3 / JCM 13877).